Here is a 442-residue protein sequence, read N- to C-terminus: 26S proteasome regulatory subunit 6A (442 aa).

Residue Ser-12 is modified to Phosphoserine. An ATP-binding site is contributed by 230 to 237 (GPPGTGKT). Residue Ser-379 is modified to Phosphoserine.

Belongs to the AAA ATPase family. In terms of assembly, component of the 19S proteasome regulatory particle complex. The 26S proteasome consists of a 20S core particle (CP) and two 19S regulatory subunits (RP). The regulatory particle is made of a lid composed of 9 subunits, a base containing 6 ATPases including PSMC3 and few additional components. Interacts with PAAF1.

It is found in the cytoplasm. The protein localises to the nucleus. In terms of biological role, component of the 26S proteasome, a multiprotein complex involved in the ATP-dependent degradation of ubiquitinated proteins. This complex plays a key role in the maintenance of protein homeostasis by removing misfolded or damaged proteins, which could impair cellular functions, and by removing proteins whose functions are no longer required. Therefore, the proteasome participates in numerous cellular processes, including cell cycle progression, apoptosis, or DNA damage repair. PSMC3 belongs to the heterohexameric ring of AAA (ATPases associated with diverse cellular activities) proteins that unfolds ubiquitinated target proteins that are concurrently translocated into a proteolytic chamber and degraded into peptides. This is 26S proteasome regulatory subunit 6A (Psmc3) from Mus musculus (Mouse).